The following is a 143-amino-acid chain: Large ribosomal subunit protein uL11 (143 aa).

It belongs to the universal ribosomal protein uL11 family. As to quaternary structure, part of the ribosomal stalk of the 50S ribosomal subunit. Interacts with L10 and the large rRNA to form the base of the stalk. L10 forms an elongated spine to which L12 dimers bind in a sequential fashion forming a multimeric L10(L12)X complex. One or more lysine residues are methylated.

Functionally, forms part of the ribosomal stalk which helps the ribosome interact with GTP-bound translation factors. The polypeptide is Large ribosomal subunit protein uL11 (Variovorax paradoxus (strain S110)).